A 372-amino-acid polypeptide reads, in one-letter code: MIFDEDSNSIAQDSGYMAVGNAYSNGVSYISMSDHWSKLTKPSSIKVVPSGASPNKADLIIEPLESGFALTLGNALRRVMMSSLRGFAVYGVEIENVLHEFTSISGVREDVTDILLNISMMRVKLSGMNSKVLSLKVKGPCEVRSGMIPDTDDCIILNKDLLICTLDQGVDFNIKMYVNAGKGYVPAVKRKSVNKLGDIPINFIATNALYSPIKKASFKVESSRIGQFTDYDRLIMSVETDGSILPDEAVALAARILQDQFQPFINFDETDEPHKKVDAKDTLPYDSNLLRKVDELELSVRSYNCLKNDNITYIGDLVQKTESDMLRTPNFGRKSLNEINELLASMNLHLGMKIANWPPESIESLSKQYSEE.

An alpha N-terminal domain (alpha-NTD) region spans residues Met-1–Asp-268. The segment at Lys-280–Glu-372 is alpha C-terminal domain (alpha-CTD).

Belongs to the RNA polymerase alpha chain family. In terms of assembly, homodimer. The RNAP catalytic core consists of 2 alpha, 1 beta, 1 beta' and 1 omega subunit. When a sigma factor is associated with the core the holoenzyme is formed, which can initiate transcription.

The catalysed reaction is RNA(n) + a ribonucleoside 5'-triphosphate = RNA(n+1) + diphosphate. In terms of biological role, DNA-dependent RNA polymerase catalyzes the transcription of DNA into RNA using the four ribonucleoside triphosphates as substrates. The polypeptide is DNA-directed RNA polymerase subunit alpha (Ehrlichia chaffeensis (strain ATCC CRL-10679 / Arkansas)).